The primary structure comprises 720 residues: DNA replication licensing factor mcm7 (720 aa).

The C4-type zinc finger occupies 183 to 210; it reads CDQCGAETYQPIQSPTFMPLIMCPSREC. Positions 331–537 constitute an MCM domain; the sequence is FYEKLAASIA…NDLRLAQHIT (207 aa). Y344, G383, A385, K386, S387, N488, R513, and R603 together coordinate ATP. Residues 512-515 carry the Arginine finger motif; the sequence is SRFD.

This sequence belongs to the MCM family. Component of the mcm2-7 complex (RLF-M). The complex forms a toroidal hexameric ring with the proposed subunit order mcm2-mcm6-mcm4-mcm7-mcm3-mcm5. The heterodimer of mmcm3/mcm5 interacts with mcm4, mmcm6, mcm7 and weakly with mcm2. The N-terminus is required for interaction with mmcm3, though this interaction may not be direct, and remains in a complex with mmcm3 throughout the cell cycle. Begins to associate with zmcm6 at the neurula stage. Component of the replisome complex. Component of the CMG helicase complex, composed of the mcm2-7 complex, the GINS complex and cdc45. Ubiquitinated by traip when forks converge following formation of DNA interstrand cross-links. Short ubiquitin chains on mcm7 promote recruitment of DNA glycosylase neil3. If the interstrand cross-link cannot be cleaved by neil3, the ubiquitin chains continue to grow on mcm7, promoting the unloading of the CMG helicase complex by the vcp/p97 ATPase.

Its subcellular location is the nucleus. The protein localises to the chromosome. It carries out the reaction ATP + H2O = ADP + phosphate + H(+). In terms of biological role, acts as a component of the mcm2-7 complex (mcm complex) which is the putative replicative helicase essential for 'once per cell cycle' DNA replication initiation and elongation in eukaryotic cells. The active ATPase sites in the mcm2-7 ring are formed through the interaction surfaces of two neighboring subunits such that a critical structure of a conserved arginine finger motif is provided in trans relative to the ATP-binding site of the Walker A box of the adjacent subunit. The six ATPase active sites, however, are likely to contribute differentially to the complex helicase activity. The existence of maternal and zygotic forms of mcm3 and mcm6 suggests that specific forms of mcm2-7 complexes may be used during different stages of development. The polypeptide is DNA replication licensing factor mcm7 (Xenopus tropicalis (Western clawed frog)).